Reading from the N-terminus, the 193-residue chain is Xanthine phosphoribosyltransferase (193 aa).

Positions 20 and 27 each coordinate xanthine. 128–132 (ANGQA) lines the 5-phospho-alpha-D-ribose 1-diphosphate pocket. Residue K156 participates in xanthine binding.

Belongs to the purine/pyrimidine phosphoribosyltransferase family. Xpt subfamily. As to quaternary structure, homodimer.

The protein localises to the cytoplasm. The catalysed reaction is XMP + diphosphate = xanthine + 5-phospho-alpha-D-ribose 1-diphosphate. Its pathway is purine metabolism; XMP biosynthesis via salvage pathway; XMP from xanthine: step 1/1. In terms of biological role, converts the preformed base xanthine, a product of nucleic acid breakdown, to xanthosine 5'-monophosphate (XMP), so it can be reused for RNA or DNA synthesis. The sequence is that of Xanthine phosphoribosyltransferase from Streptococcus pneumoniae serotype 19F (strain G54).